We begin with the raw amino-acid sequence, 113 residues long: CRISPR-associated endoribonuclease Cas2 (113 aa).

D33 serves as a coordination point for Mg(2+).

This sequence belongs to the CRISPR-associated endoribonuclease Cas2 protein family. Homodimer, forms a heterotetramer with a Cas1 homodimer. It depends on Mg(2+) as a cofactor.

Functionally, CRISPR (clustered regularly interspaced short palindromic repeat), is an adaptive immune system that provides protection against mobile genetic elements (viruses, transposable elements and conjugative plasmids). CRISPR clusters contain sequences complementary to antecedent mobile elements and target invading nucleic acids. CRISPR clusters are transcribed and processed into CRISPR RNA (crRNA). Functions as a ssRNA-specific endoribonuclease. Involved in the integration of spacer DNA into the CRISPR cassette. The type III-A Csm effector complex binds crRNA and acts as a crRNA-guided RNase, DNase and cyclic oligoadenylate synthase; binding of target RNA cognate to the crRNA is required for all activities. This Mycobacterium tuberculosis (strain CDC 1551 / Oshkosh) protein is CRISPR-associated endoribonuclease Cas2.